The primary structure comprises 349 residues: Gibberellin 3-beta-dioxygenase 3 (349 aa).

The region spanning 201-305 (SIQSFLQLNS…RVSAAYFAGP (105 aa)) is the Fe2OG dioxygenase domain. Fe cation-binding residues include His-226, Asp-228, and His-286. Arg-296 is a catalytic residue.

It belongs to the iron/ascorbate-dependent oxidoreductase family. GA3OX subfamily. It depends on L-ascorbate as a cofactor. Requires Fe cation as cofactor. As to expression, expressed in flower clusters and siliques.

It carries out the reaction gibberellin A20 + 2-oxoglutarate + O2 = gibberellin A1 + succinate + CO2. It functions in the pathway plant hormone biosynthesis; gibberellin biosynthesis. In terms of biological role, converts the inactive gibberellin (GA) precursors GA9 and GA20 in the bioactives gibberellins GA4 and GA1. Involved in the production of bioactive GA for reproductive development. In Arabidopsis thaliana (Mouse-ear cress), this protein is Gibberellin 3-beta-dioxygenase 3 (GA3OX3).